Consider the following 231-residue polypeptide: Equistatin (231 aa).

The first 32 residues, 1–32 (MALSQNQAKFSKGFVVMIWVLFIACAITSTEA), serve as a signal peptide directing secretion. Thyroglobulin type-1 domains follow at residues 34–95 (LTKC…SPDC), 102–163 (LTLC…RPTC), and 167–231 (LSEC…RPTC). Disulfide bonds link Cys37-Cys56, Cys67-Cys74, Cys76-Cys95, Cys105-Cys124, Cys135-Cys142, Cys144-Cys163, Cys170-Cys191, Cys202-Cys209, and Cys211-Cys231.

The protein belongs to the protease inhibitor I31 family.

The protein resides in the secreted. Functionally, potent inhibitor of papain-like cysteine proteinases (Ki=0.18-0.57 nM on papain), as well as of the aspartic proteinase cathepsin D (Ki=0.3-05 nM). In Actinia equina (Beadlet anemone), this protein is Equistatin.